A 327-amino-acid chain; its full sequence is Spermidine/putrescine import ATP-binding protein PotA (327 aa).

Residues 5-235 (IKVEAVEKHF…PKTLFVATFI (231 aa)) enclose the ABC transporter domain. An ATP-binding site is contributed by 37-44 (GPSGCGKT).

Belongs to the ABC transporter superfamily. Spermidine/putrescine importer (TC 3.A.1.11.1) family. In terms of assembly, the complex is composed of two ATP-binding proteins (PotA), two transmembrane proteins (PotB and PotC) and a solute-binding protein (PotD).

The protein localises to the cell membrane. The enzyme catalyses ATP + H2O + polyamine-[polyamine-binding protein]Side 1 = ADP + phosphate + polyamineSide 2 + [polyamine-binding protein]Side 1.. Its function is as follows. Part of the ABC transporter complex PotABCD involved in spermidine/putrescine import. Responsible for energy coupling to the transport system. This is Spermidine/putrescine import ATP-binding protein PotA from Bacillus thuringiensis (strain Al Hakam).